We begin with the raw amino-acid sequence, 380 residues long: Lipid-A-disaccharide synthase (380 aa).

This sequence belongs to the LpxB family.

The enzyme catalyses a lipid X + a UDP-2-N,3-O-bis[(3R)-3-hydroxyacyl]-alpha-D-glucosamine = a lipid A disaccharide + UDP + H(+). It functions in the pathway bacterial outer membrane biogenesis; LPS lipid A biosynthesis. Its function is as follows. Condensation of UDP-2,3-diacylglucosamine and 2,3-diacylglucosamine-1-phosphate to form lipid A disaccharide, a precursor of lipid A, a phosphorylated glycolipid that anchors the lipopolysaccharide to the outer membrane of the cell. This Francisella philomiragia subsp. philomiragia (strain ATCC 25017 / CCUG 19701 / FSC 153 / O#319-036) protein is Lipid-A-disaccharide synthase.